The following is a 151-amino-acid chain: UPF0178 protein VSAL_I0701 (151 aa).

This sequence belongs to the UPF0178 family.

This is UPF0178 protein VSAL_I0701 from Aliivibrio salmonicida (strain LFI1238) (Vibrio salmonicida (strain LFI1238)).